Here is a 743-residue protein sequence, read N- to C-terminus: Keratin, type I cytoskeletal 9 (743 aa).

A compositionally biased stretch (low complexity) spans 1-16; that stretch reads MSCRQSSSSFWSSSSS. The segment at 1–46 is disordered; sequence MSCRQSSSSFWSSSSSCGGGGGRGGSGGSMRSSFSRSSRAGGGGGG. Residues 1–130 are head; that stretch reads MSCRQSSSSF…GGEGGILNTN (130 aa). 2 positions are modified to phosphoserine: Ser-14 and Ser-16. The span at 17–28 shows a compositional bias: gly residues; sequence CGGGGGRGGSGG. Positions 29–39 are enriched in low complexity; it reads SMRSSFSRSSR. Ser-55 and Ser-155 each carry phosphoserine. Positions 131–166 are coil 1A; it reads EKIVMQNLNSRLASYMEKVLELEESNTAMEKQIQDW. The region spanning 131-443 is the IF rod domain; that stretch reads EKIVMQNLNS…ELLEGGQQDF (313 aa). Residues 167 to 185 form a linker 1 region; that stretch reads YSKRGPKVFQKDNTHYYDT. The coil 1B stretch occupies residues 186–277; that stretch reads IEDLKDRIVD…KNHKEEMSQL (92 aa). The interval 278-300 is linker 12; sequence TGQNDGDVNVEINVAPSTDLTRV. The tract at residues 301–439 is coil 2; that stretch reads LNDMREEYEQ…ETYRELLEGG (139 aa). Disordered regions lie at residues 440-468 and 501-743; these read QQDF…GSYG and GGSG…KMRY. Residues 440–709 are tail; sequence QQDFESSGAG…GGGSGSGGGS (270 aa). Composition is skewed to gly residues over residues 449–468 and 501–717; these read GQIG…GSYG and GGSG…GGGN.

It belongs to the intermediate filament family. In terms of assembly, heterotetramer of two type I and two type II keratins. As to expression, expressed in footpad epidermis and testis (at protein level).

Its function is as follows. May serve an important special function either in the mature palmar and plantar skin tissue or in the morphogenetic program of the formation of these tissues. Plays a role in keratin filament assembly. Plays an essential role in the correct development of sperm. This is Keratin, type I cytoskeletal 9 from Mus musculus (Mouse).